A 529-amino-acid polypeptide reads, in one-letter code: Peptide chain release factor 3 (529 aa).

A tr-type G domain is found at 11 to 280 (SKRRTFAIIS…SLIKWAPSPI (270 aa)). GTP is bound by residues 20–27 (SHPDAGKT), 88–92 (DTPGH), and 142–145 (NKLD).

This sequence belongs to the TRAFAC class translation factor GTPase superfamily. Classic translation factor GTPase family. PrfC subfamily.

The protein resides in the cytoplasm. Functionally, increases the formation of ribosomal termination complexes and stimulates activities of RF-1 and RF-2. It binds guanine nucleotides and has strong preference for UGA stop codons. It may interact directly with the ribosome. The stimulation of RF-1 and RF-2 is significantly reduced by GTP and GDP, but not by GMP. This chain is Peptide chain release factor 3, found in Buchnera aphidicola subsp. Schizaphis graminum (strain Sg).